A 287-amino-acid chain; its full sequence is Proteasome subunit alpha (287 aa).

The tract at residues 241 to 287 is disordered; the sequence is GVVAGEEPHTAAHAPSVPQPGAPAGLGDPGAPDTGGTAGSGGEAPTT. Residues 262–275 show a composition bias toward low complexity; it reads APAGLGDPGAPDTG. Positions 276 to 287 are enriched in gly residues; it reads GTAGSGGEAPTT.

The protein belongs to the peptidase T1A family. As to quaternary structure, the 20S proteasome core is composed of 14 alpha and 14 beta subunits that assemble into four stacked heptameric rings, resulting in a barrel-shaped structure. The two inner rings, each composed of seven catalytic beta subunits, are sandwiched by two outer rings, each composed of seven alpha subunits. The catalytic chamber with the active sites is on the inside of the barrel. Has a gated structure, the ends of the cylinder being occluded by the N-termini of the alpha-subunits. Is capped by the proteasome-associated ATPase, ARC.

The protein localises to the cytoplasm. The protein operates within protein degradation; proteasomal Pup-dependent pathway. With respect to regulation, the formation of the proteasomal ATPase ARC-20S proteasome complex, likely via the docking of the C-termini of ARC into the intersubunit pockets in the alpha-rings, may trigger opening of the gate for substrate entry. Interconversion between the open-gate and close-gate conformations leads to a dynamic regulation of the 20S proteasome proteolysis activity. Its function is as follows. Component of the proteasome core, a large protease complex with broad specificity involved in protein degradation. The chain is Proteasome subunit alpha from Geodermatophilus obscurus (strain ATCC 25078 / DSM 43160 / JCM 3152 / CCUG 61914 / KCC A-0152 / KCTC 9177 / NBRC 13315 / NRRL B-3577 / G-20).